Consider the following 339-residue polypeptide: Glycerol-3-phosphate dehydrogenase [NAD(P)+] (339 aa).

The NADPH site is built by S15, Y16, H36, and K110. 3 residues coordinate sn-glycerol 3-phosphate: K110, G139, and T141. NADPH is bound at residue A143. Positions 195, 248, 258, 259, and 260 each coordinate sn-glycerol 3-phosphate. The Proton acceptor role is filled by K195. R259 contacts NADPH. V283 and E285 together coordinate NADPH.

The protein belongs to the NAD-dependent glycerol-3-phosphate dehydrogenase family.

The protein localises to the cytoplasm. It catalyses the reaction sn-glycerol 3-phosphate + NAD(+) = dihydroxyacetone phosphate + NADH + H(+). The catalysed reaction is sn-glycerol 3-phosphate + NADP(+) = dihydroxyacetone phosphate + NADPH + H(+). It participates in membrane lipid metabolism; glycerophospholipid metabolism. Its function is as follows. Catalyzes the reduction of the glycolytic intermediate dihydroxyacetone phosphate (DHAP) to sn-glycerol 3-phosphate (G3P), the key precursor for phospholipid synthesis. This chain is Glycerol-3-phosphate dehydrogenase [NAD(P)+], found in Yersinia pseudotuberculosis serotype O:1b (strain IP 31758).